We begin with the raw amino-acid sequence, 436 residues long: Aminopeptidase C (436 aa).

Catalysis depends on residues Cys-68, His-356, and Asn-378.

It belongs to the peptidase C1 family. As to quaternary structure, homohexamer.

The enzyme catalyses Inactivates bleomycin B2 (a cytotoxic glycometallopeptide) by hydrolysis of a carboxyamide bond of beta-aminoalanine, but also shows general aminopeptidase activity. The specificity varies somewhat with source, but amino acid arylamides of Met, Leu and Ala are preferred.. Functionally, hydrolyzes naphthylamide-substituted amino acids as well as di- and tripeptides in which the half-cystine residue is involved in a disulfide loop, notably in oxytocin and vasopressin. Also has a bleomycin hydrolase activity. This Lactococcus lactis subsp. lactis (strain IL1403) (Streptococcus lactis) protein is Aminopeptidase C (pepC).